The following is a 275-amino-acid chain: Large ribosomal subunit protein uL2 (275 aa).

The span at 35 to 49 (DSQSSTAGRNNNGRI) shows a compositional bias: polar residues. Disordered stretches follow at residues 35 to 59 (DSQS…GGHK) and 224 to 275 (AMNP…RHKR). Residues 50–59 (TTRHKGGGHK) are compositionally biased toward basic residues.

The protein belongs to the universal ribosomal protein uL2 family. In terms of assembly, part of the 50S ribosomal subunit. Forms a bridge to the 30S subunit in the 70S ribosome.

One of the primary rRNA binding proteins. Required for association of the 30S and 50S subunits to form the 70S ribosome, for tRNA binding and peptide bond formation. It has been suggested to have peptidyltransferase activity; this is somewhat controversial. Makes several contacts with the 16S rRNA in the 70S ribosome. This is Large ribosomal subunit protein uL2 from Burkholderia cenocepacia (strain HI2424).